A 281-amino-acid polypeptide reads, in one-letter code: MAQKIIRVGNIEIANDKPMVLFGGMNVLESRDMAMQVCEEYVRVTEKLGIPYVFKASFDKANRSSVTSYRGPGLEEGMRIFEDVKQAFGVPIITDVHEPAQAAVVAEVCDIIQLPAFLSRQTDLVVAMAKTGAVINIKKAQFLAPQEMKHILSKCEEAGNDQLILCERGSSFGYNNLVVDMLGFGIMKQFEYPVFFDVTHALQMPGGRADSAGGRRAQVTDLAKAGMSQSLAGLFLEAHPDPDNAKCDGPCALRLDKLEPFLAQLKALDELVKSFPTVETA.

This sequence belongs to the KdsA family.

It localises to the cytoplasm. It catalyses the reaction D-arabinose 5-phosphate + phosphoenolpyruvate + H2O = 3-deoxy-alpha-D-manno-2-octulosonate-8-phosphate + phosphate. It functions in the pathway carbohydrate biosynthesis; 3-deoxy-D-manno-octulosonate biosynthesis; 3-deoxy-D-manno-octulosonate from D-ribulose 5-phosphate: step 2/3. The protein operates within bacterial outer membrane biogenesis; lipopolysaccharide biosynthesis. This is 2-dehydro-3-deoxyphosphooctonate aldolase from Pseudomonas fluorescens (strain ATCC BAA-477 / NRRL B-23932 / Pf-5).